The primary structure comprises 230 residues: Somatolactin (230 aa).

Positions 1-23 (MNMMTVKQGVWAALLWPYLLAAS) are cleaved as a signal peptide. 3 disulfides stabilise this stretch: Cys28–Cys38, Cys88–Cys204, and Cys221–Cys229. N-linked (GlcNAc...) asparagine glycosylation is found at Asn137 and Asn144.

It belongs to the somatotropin/prolactin family.

The protein localises to the secreted. The chain is Somatolactin from Hippoglossus hippoglossus (Atlantic halibut).